The sequence spans 103 residues: Matrix Gla protein (103 aa).

Residues 1–19 (MRSLLLLTVLAALVVAILC) form the signal peptide. Position 21 is a 4-carboxyglutamate (Glu-21). Phosphoserine occurs at positions 22, 25, and 28. Residues 51–97 (MAKAQERVREQRKPAYELNREACDDYKLCERYAMVYGYNAAYNRYFR) enclose the Gla domain. 4-carboxyglutamate occurs at positions 56, 60, 67, and 71. A disulfide bond links Cys-73 and Cys-79.

It belongs to the osteocalcin/matrix Gla protein family. Requires vitamin K-dependent gamma-carboxylation for its function.

The protein localises to the secreted. Associates with the organic matrix of bone and cartilage. Thought to act as an inhibitor of bone formation. The protein is Matrix Gla protein (MGP) of Oryctolagus cuniculus (Rabbit).